The sequence spans 152 residues: Large ribosomal subunit protein uL13 (152 aa).

This sequence belongs to the universal ribosomal protein uL13 family. In terms of assembly, part of the 50S ribosomal subunit.

Its function is as follows. This protein is one of the early assembly proteins of the 50S ribosomal subunit, although it is not seen to bind rRNA by itself. It is important during the early stages of 50S assembly. This is Large ribosomal subunit protein uL13 from Wolbachia pipientis subsp. Culex pipiens (strain wPip).